The primary structure comprises 115 residues: MSRVKRGNVAKKRRAKIFKLAKGFKGAHKCLFRTAKQQVLKALRYSYVGRKRKKRDFRRLWITRINAAAHNQGMNYSTFISALKKENIALNRKMLAQLASNDIQTFQTVLETVKN.

The protein belongs to the bacterial ribosomal protein bL20 family.

It localises to the plastid. The protein resides in the chloroplast. Binds directly to 23S ribosomal RNA and is necessary for the in vitro assembly process of the 50S ribosomal subunit. It is not involved in the protein synthesizing functions of that subunit. This Pyropia yezoensis (Susabi-nori) protein is Large ribosomal subunit protein bL20c.